The sequence spans 120 residues: Cell division protein FtsL (120 aa).

Positions 1-22 (MSNVAYKSNLEPNRVHREAEQP) are disordered. Topologically, residues 1-37 (MSNVAYKSNLEPNRVHREAEQPKKQILKRGQMTLGEK) are cytoplasmic. Basic and acidic residues predominate over residues 13-22 (NRVHREAEQP). The helical transmembrane segment at 38 to 58 (VIITIALAIVLVVAFRIISVQ) threads the bilayer. Residues 59–120 (AQIYTVNQEI…GDNVKVVDGQ (62 aa)) lie on the Extracellular side of the membrane.

Belongs to the FtsL family.

The protein localises to the cell membrane. Essential cell division protein. The polypeptide is Cell division protein FtsL (Listeria monocytogenes serovar 1/2a (strain ATCC BAA-679 / EGD-e)).